A 1499-amino-acid polypeptide reads, in one-letter code: Condensin complex subunit 1 (1499 aa).

Disordered regions lie at residues 1 to 43 (MPRK…DGLS) and 1421 to 1499 (ITKN…MLDD). Residues 1432 to 1446 (PTTMSGSSRTTSRAA) are compositionally biased toward low complexity. 2 stretches are compositionally biased toward acidic residues: residues 1458 to 1467 (SDEDDSDSDD) and 1486 to 1499 (ADDD…MLDD).

It belongs to the CND1 (condensin subunit 1) family. Component of the condensin I complex, which contains the mix-1/SMC2 and smc-4/SMC4 heterodimer, and three non SMC subunits that probably regulate the complex: dpy-26, capg-1 and dpy-28. Within the complex, interacts with dpy-26 and smc-4. Component of the dosage compensation complex, which consist of the condensin I like components mix-1/SMC2 and dpy-27/SMC4, and the three non SMC subunits dpy-26, capg-1 and dpy-28. Within the complex, interacts with mix-1, dpy-27, dpy-26 and capg-1. Interacts with smcl-1. Post-translationally, sumoylated. Sumoylated in the context of the dosage compensation complex but not in the condensin I complex. Sumoylation is important for assembly of the dosage compensation complex and its robust binding to the X chromosome. In terms of tissue distribution, expressed in somatic and germline tissues (at protein level).

It is found in the nucleus. The protein localises to the chromosome. Functionally, required for both chromosome condensation and segregation during mitosis and meiosis and X-chromosome dosage compensation depending on its binding partners. Regulatory subunit of the condensin I complex, a complex required for conversion of interphase chromatin into mitotic-like condense chromosomes. The condensin I complex probably introduces positive supercoils into relaxed DNA in the presence of type I topoisomerases and converts nicked DNA into positive knotted forms in the presence of type II topoisomerases. The condensin I complex function is required for proper chromosome segregation in mitosis and meiosis. As a member of the condensin I complex, further controls the crossover number and distribution in meiosis by restricting double strand break formation, possibly by influencing higher-order chromosome structure. Plays a role in robust cytokinesis upon presence of chromatin obstructions. Also a member of the condensin I-like dosage compensation complex that associates specifically with hermaphrodite X chromosomes to reduce their gene transcription during interphase, possibly through chromatin reorganization. This Caenorhabditis elegans protein is Condensin complex subunit 1.